The following is a 360-amino-acid chain: G-protein coupled receptor 15 (360 aa).

Residues 1–33 (MDPEETSVYLDYYYATSPNPDIRETHSHVPYTS) lie on the Extracellular side of the membrane. The helical transmembrane segment at 34–54 (VFLPVFYTAVFLTGVLGNLVL) threads the bilayer. Residues 55–69 (MGALHFKPGSRRLID) are Cytoplasmic-facing. A helical membrane pass occupies residues 70–90 (IFIINLAASDFIFLVTLPLWV). The Extracellular portion of the chain corresponds to 91–120 (DKEASLGLWRTGSFLCKGSSYMISVNMHCS). The chain crosses the membrane as a helical span at residues 121-141 (VFLLTCMSVDRYLAIVCPVVS). Over 142-149 (RKFRRTDC) the chain is Cytoplasmic. A helical transmembrane segment spans residues 150–170 (AYVVCASIWFISCLLGLPTLL). Topologically, residues 171–192 (SRELTLIDDKPYCAEKKATPLK) are extracellular. A helical transmembrane segment spans residues 193–213 (LIWSLVALIFTFFVPLLSIVT). Topologically, residues 214–239 (CYCCIARKLCAHYQQSGKHNKKLKKS) are cytoplasmic. The chain crosses the membrane as a helical span at residues 240–260 (IKIIFIVVAAFLVSWLPFNTF). Residues 261–284 (KLLAIVSGLQQERYFPSAMLQLGM) lie on the Extracellular side of the membrane. The helical transmembrane segment at 285–305 (EVSGPLAFANSCVNPFIYYIF) threads the bilayer. Residues 306–360 (DSYIRRAIVHCLCPCLKNYDFGSSTETSDSHLTKALSTFIHAEDFTRRRKRSVSL) are Cytoplasmic-facing. Residue Ser-359 is modified to Phosphoserine.

This sequence belongs to the G-protein coupled receptor 1 family. Interacts with adapter YWHAE; this interaction promotes ER-to-Golgi transport of GPR15. Phosphorylation is necessary for YWHAE binding and efficient surface expression. Post-translationally, O-glycosylated. Sialylated O-glycans in the N-terminal tail inhibits binding of GPR15LG. In terms of processing, sulfation is required for efficient binding of GPR15LG.

It is found in the cell membrane. Functionally, g protein-coupled receptor that plays an important role in immune homeostasis. Acts via its natural ligand GPR15LG, a chemokine-like polypeptide strongly expressed in gastrointestinal tissues. GPR15-GPR15LG signaling axis regulates intestinal homeostasis and inflammation through the migration of immune cells. Controls thereby the specific homing of T-cells, particularly FOXP3+ regulatory T-cells (Tregs), to the large intestine lamina propria. Also required for skin localization of thymus-derived dendritic epidermal T-cells. Plays an important role in mediating cytoprotective function as well as angiogenesis of thrombomodulin. Mechanistically, preferentially signals through the Gi/o pathway to inhibit adenylate cyclase activity and activate a phosphatidylinositol-calcium second messenger system that regulates the release of Ca(2+) ions from intracellular stores. The sequence is that of G-protein coupled receptor 15 (GPR15) from Macaca mulatta (Rhesus macaque).